Consider the following 174-residue polypeptide: Probable carboxylesterase Culp5 (174 aa).

The active-site Nucleophile is the serine 67. A disulfide bond links cysteine 137 and cysteine 144. The active site involves aspartate 141. Catalysis depends on histidine 153, which acts as the Proton donor/acceptor.

The protein belongs to the cutinase family.

In terms of biological role, does not exhibit cutinase activity. The protein is Probable carboxylesterase Culp5 of Mycobacterium tuberculosis (strain ATCC 25618 / H37Rv).